Here is a 285-residue protein sequence, read N- to C-terminus: (3S)-malyl-CoA thioesterase (285 aa).

Substrate is bound by residues Arg70 and Glu122. Positions 122 and 148 each coordinate Mg(2+).

The protein belongs to the HpcH/HpaI aldolase family. As to quaternary structure, homodimer or homotrimer. The cofactor is Mg(2+).

The catalysed reaction is (S)-malyl-CoA + H2O = (S)-malate + CoA + H(+). In terms of biological role, catalyzes the hydrolysis of (3S)-malyl-CoA to (3S)-malate and free CoA. Inactive towards beta-methylmalyl-CoA and other CoA esters. This chain is (3S)-malyl-CoA thioesterase, found in Cereibacter sphaeroides (strain KD131 / KCTC 12085) (Rhodobacter sphaeroides).